The following is a 456-amino-acid chain: Arginine biosynthesis bifunctional protein ArgJ, mitochondrial (456 aa).

Substrate is bound by residues T184, K213, T224, E311, N451, and T456. T224 (nucleophile) is an active-site residue.

Belongs to the ArgJ family. Heterodimer of an alpha and a beta chain. In terms of processing, the alpha and beta chains are autoproteolytically processed from a single precursor protein within the mitochondrion.

The protein resides in the mitochondrion matrix. The enzyme catalyses N(2)-acetyl-L-ornithine + L-glutamate = N-acetyl-L-glutamate + L-ornithine. It carries out the reaction L-glutamate + acetyl-CoA = N-acetyl-L-glutamate + CoA + H(+). The protein operates within amino-acid biosynthesis; L-arginine biosynthesis; L-ornithine and N-acetyl-L-glutamate from L-glutamate and N(2)-acetyl-L-ornithine (cyclic): step 1/1. Its pathway is amino-acid biosynthesis; L-arginine biosynthesis; N(2)-acetyl-L-ornithine from L-glutamate: step 1/4. Catalyzes two activities which are involved in the cyclic version of arginine biosynthesis: the synthesis of acetylglutamate from glutamate and acetyl-CoA, and of ornithine by transacetylation between acetylornithine and glutamate. This is Arginine biosynthesis bifunctional protein ArgJ, mitochondrial from Aspergillus oryzae (strain ATCC 42149 / RIB 40) (Yellow koji mold).